Consider the following 718-residue polypeptide: MQMGVAVLVLVIACGVVSVLFAIWAIRSVLAADQGTQRMQEIAEAIREGASAYLTRQYSTIAIVGVVVFLAAWYLLSISAAIGFLIGAVLSGVTGFIGMHVSVRANVRTAQAASLSLAGGLELAFKSGAITGLLVAGLALLGVSVYYFILTVWLGYSPSDRTVIDALVSLGFGASLISIFARLGGGIFTKGADVGGDLVGKVEAGIPEDDPRNPATIADNVGDNVGDCAGMAADLFETYAVTVVATMVLGAIFFNGSDILSSVMLYPLMICGACVITSIVGTFFVKLGVNGSIMGALYKGLIATGLLSIVGLAIANTLTVGWGEIGTVAGKSITGTNLFLCGLIGLIVTGLIVVITEYYTGTNKRPVNSIAQASVTGHGTNVIQGLAVSLESTALPAIVIVGGIISTYQLAGLFGTAIAVTAMLGIAGMIVALDAFGPVTDNAGGIAEMAGLDPEVRKATDALDAVGNTTKAVTKGYAIGSAGLGALVLFAAYSNDLAYFAANGQTYPYFADMGPVSFDLSNPYVVAGLIFGGLIPYLFGGMAMTAVGRAGGAVVQEVRRQFREKPGIMTGKERPDYARAVDLLTRAAIREMIIPSLLPVLAPIVVYFGVLLISGSKAAAFAALGASLLGVIVNGLFVAISMTSGGGAWDNAKKSFEDGFTDADGVKHLKGSEAHKASVTGDTVGDPYKDTAGPAVNPAIKITNIVALLLLAVLAHMS.

Helical transmembrane passes span 6-26 (AVLV…IWAI), 54-76 (LTRQ…WYLL), 81-103 (AIGF…HVSV), 112-132 (AASL…AITG), 133-153 (LLVA…LTVW), and 168-188 (VSLG…GGIF). Lys190 lines the substrate pocket. Mg(2+) is bound by residues Asp193, Asp197, Asn220, and Asp223. Helical transmembrane passes span 240-260 (AVTV…SDIL), 265-285 (LYPL…TFFV), 300-320 (GLIA…TLTV), 335-355 (GTNL…IVVI), 385-405 (GLAV…GGII), and 413-433 (LFGT…IVAL). Asp441 serves as a coordination point for Mg(2+). The next 4 helical transmembrane spans lie at 472-492 (AVTK…LFAA), 524-544 (YVVA…GMAM), 593-613 (IIPS…VLLI), and 620-640 (AFAA…FVAI). Positions 650, 682, and 686 each coordinate Ca(2+). Substrate is bound at residue Lys689. The helical transmembrane segment at 695–715 (AVNPAIKITNIVALLLLAVLA) threads the bilayer.

The protein belongs to the H(+)-translocating pyrophosphatase (TC 3.A.10) family. K(+)-insensitive subfamily. As to quaternary structure, homodimer. Requires Mg(2+) as cofactor.

The protein localises to the cell inner membrane. It carries out the reaction diphosphate + H2O + H(+)(in) = 2 phosphate + 2 H(+)(out). Functionally, proton pump that utilizes the energy of pyrophosphate hydrolysis as the driving force for proton movement across the membrane. Generates a proton motive force. This Brucella anthropi (strain ATCC 49188 / DSM 6882 / CCUG 24695 / JCM 21032 / LMG 3331 / NBRC 15819 / NCTC 12168 / Alc 37) (Ochrobactrum anthropi) protein is K(+)-insensitive pyrophosphate-energized proton pump.